Here is a 72-residue protein sequence, read N- to C-terminus: Prokaryotic ubiquitin-like protein Pup (72 aa).

Gly residues predominate over residues 1-10; the sequence is MATKDTGGGQ. The interval 1-45 is disordered; the sequence is MATKDTGGGQQKATRNTEEVEEQAQDAQASEDLKERQEKLSDDVD. A coiled-coil region spans residues 9–60; that stretch reads GQQKATRNTEEVEEQAQDAQASEDLKERQEKLSDDVDSVLDEIDDVLEENAE. The segment at 28–66 is ARC ATPase binding; sequence QASEDLKERQEKLSDDVDSVLDEIDDVLEENAEDFVRSF. The span at 31–42 shows a compositional bias: basic and acidic residues; that stretch reads EDLKERQEKLSD. Residue E72 forms an Isoglutamyl lysine isopeptide (Glu-Lys) (interchain with K-? in acceptor proteins) linkage.

It belongs to the prokaryotic ubiquitin-like protein family. Strongly interacts with the proteasome-associated ATPase ARC through a hydrophobic interface; the interacting region of Pup lies in its C-terminal half. There is one Pup binding site per ARC hexamer ring.

The protein operates within protein degradation; proteasomal Pup-dependent pathway. Functionally, protein modifier that is covalently attached to lysine residues of substrate proteins, thereby targeting them for proteasomal degradation. The tagging system is termed pupylation. This is Prokaryotic ubiquitin-like protein Pup from Streptomyces avermitilis (strain ATCC 31267 / DSM 46492 / JCM 5070 / NBRC 14893 / NCIMB 12804 / NRRL 8165 / MA-4680).